The chain runs to 108 residues: Nucleoid-associated protein BTH_I2220 (108 aa).

This sequence belongs to the YbaB/EbfC family. As to quaternary structure, homodimer.

It localises to the cytoplasm. The protein localises to the nucleoid. Binds to DNA and alters its conformation. May be involved in regulation of gene expression, nucleoid organization and DNA protection. The sequence is that of Nucleoid-associated protein BTH_I2220 from Burkholderia thailandensis (strain ATCC 700388 / DSM 13276 / CCUG 48851 / CIP 106301 / E264).